We begin with the raw amino-acid sequence, 322 residues long: N-acetyl-gamma-glutamyl-phosphate reductase (322 aa).

The active site involves cysteine 132.

Belongs to the NAGSA dehydrogenase family. Type 1 subfamily.

The protein localises to the cytoplasm. The enzyme catalyses N-acetyl-L-glutamate 5-semialdehyde + phosphate + NADP(+) = N-acetyl-L-glutamyl 5-phosphate + NADPH + H(+). Its pathway is amino-acid biosynthesis; L-arginine biosynthesis; N(2)-acetyl-L-ornithine from L-glutamate: step 3/4. In terms of biological role, catalyzes the NADPH-dependent reduction of N-acetyl-5-glutamyl phosphate to yield N-acetyl-L-glutamate 5-semialdehyde. This Parabacteroides distasonis (strain ATCC 8503 / DSM 20701 / CIP 104284 / JCM 5825 / NCTC 11152) protein is N-acetyl-gamma-glutamyl-phosphate reductase.